The sequence spans 506 residues: Hippocampus abundant transcript-like protein 1 (506 aa).

The tract at residues 1–25 (MSVEPPPELEEKAASEPEAGAMPEK) is disordered. At 1 to 49 (MSVEPPPELEEKAASEPEAGAMPEKRAGAQAAGSTWLQGFGRPSVYHAA) the chain is on the extracellular side. The chain crosses the membrane as a helical span at residues 50-70 (IVIFLEFFAWGLLTTPMLTVL). Residues 71–82 (HETFSQHTFLMN) lie on the Cytoplasmic side of the membrane. A helical membrane pass occupies residues 83–103 (GLIQGVKGLLSFLSAPLIGAL). Residues 104-111 (SDVWGRKP) are Extracellular-facing. Residues 112–132 (FLLGTVFFTCFPIPLMRISPW) form a helical membrane-spanning segment. The Cytoplasmic segment spans residues 133-134 (WY). Residues 135–155 (FAMISVSGVFSVTFSVIFAYV) form a helical membrane-spanning segment. Residues 156–168 (ADVTQEHERSTAY) are Extracellular-facing. The helical transmembrane segment at 169 to 189 (GWVSATFAASLVSSPAIGAYL) threads the bilayer. The Cytoplasmic segment spans residues 190–196 (SASYGDS). The chain crosses the membrane as a helical span at residues 197 to 217 (LVVLVATVVALLDICFILVAV). Over 218–255 (PESLPEKMRPVSWGAQISWKQADPFASLKKVGKDSTVL) the chain is Extracellular. The chain crosses the membrane as a helical span at residues 256-276 (LICITVFLSYLPEAGQYSSFF). At 277–281 (LYLRQ) the chain is on the cytoplasmic side. A helical membrane pass occupies residues 282–302 (VIGFGSVKIAAFIAMVGILSI). Residues 303–319 (VAQTAFLSILMRSLGNK) lie on the Extracellular side of the membrane. The chain crosses the membrane as a helical span at residues 320–340 (NTVLLGLGFQMLQLAWYGFGS). Position 341 (Gln341) is a topological domain, cytoplasmic. A helical transmembrane segment spans residues 342–362 (AWMMWAAGTVAAMSSITFPAI). Topologically, residues 363 to 387 (SALVSRNAESDQQGVAQGIITGIRG) are extracellular. Residues 388-408 (LCNGLGPALYGFIFYMFHVEL) form a helical membrane-spanning segment. The Cytoplasmic portion of the chain corresponds to 409-428 (TELGPKLNSNNVPLQGAVIP). The helical transmembrane segment at 429 to 449 (GPPFLFGACIVLMSFLVALFI) threads the bilayer. At 450–506 (PEYSKASGVQKHSNSSSGSLTNTPERGSDEDIEPLLQDSSIWELSSFEEPGNQCTEL) the chain is on the extracellular side. The interval 457 to 481 (GVQKHSNSSSGSLTNTPERGSDEDI) is disordered. Positions 459–474 (QKHSNSSSGSLTNTPE) are enriched in polar residues. The N-linked (GlcNAc...) asparagine glycan is linked to Asn463.

The protein belongs to the major facilitator superfamily.

The protein resides in the membrane. The protein is Hippocampus abundant transcript-like protein 1 of Homo sapiens (Human).